Here is a 156-residue protein sequence, read N- to C-terminus: Cell division protein SepF (156 aa).

The protein belongs to the SepF family. As to quaternary structure, homodimer. Interacts with FtsZ.

The protein localises to the cytoplasm. Cell division protein that is part of the divisome complex and is recruited early to the Z-ring. Probably stimulates Z-ring formation, perhaps through the cross-linking of FtsZ protofilaments. Its function overlaps with FtsA. This chain is Cell division protein SepF, found in Bacillus cytotoxicus (strain DSM 22905 / CIP 110041 / 391-98 / NVH 391-98).